A 394-amino-acid polypeptide reads, in one-letter code: S-adenosylmethionine synthase (394 aa).

Residue His-16 participates in ATP binding. Asp-18 contributes to the Mg(2+) binding site. Glu-44 lines the K(+) pocket. Positions 57 and 100 each coordinate L-methionine. The tract at residues 100-110 (QSPDIAQGVDA) is flexible loop. ATP-binding positions include 172 to 174 (DAK), 239 to 240 (RF), Asp-248, 254 to 255 (RK), Ala-271, and Lys-275. Asp-248 contributes to the L-methionine binding site. Position 279 (Lys-279) interacts with L-methionine.

This sequence belongs to the AdoMet synthase family. As to quaternary structure, homotetramer; dimer of dimers. It depends on Mg(2+) as a cofactor. Requires K(+) as cofactor.

It localises to the cytoplasm. It carries out the reaction L-methionine + ATP + H2O = S-adenosyl-L-methionine + phosphate + diphosphate. It participates in amino-acid biosynthesis; S-adenosyl-L-methionine biosynthesis; S-adenosyl-L-methionine from L-methionine: step 1/1. Functionally, catalyzes the formation of S-adenosylmethionine (AdoMet) from methionine and ATP. The overall synthetic reaction is composed of two sequential steps, AdoMet formation and the subsequent tripolyphosphate hydrolysis which occurs prior to release of AdoMet from the enzyme. This is S-adenosylmethionine synthase from Enterococcus faecalis (strain ATCC 700802 / V583).